The primary structure comprises 176 residues: Peptidyl-prolyl cis-trans isomerase cyp5 (176 aa).

The PPIase cyclophilin-type domain occupies Phe10–Glu173.

The protein belongs to the cyclophilin-type PPIase family.

It catalyses the reaction [protein]-peptidylproline (omega=180) = [protein]-peptidylproline (omega=0). Its function is as follows. PPIases accelerate the folding of proteins. It catalyzes the cis-trans isomerization of proline imidic peptide bonds in oligopeptides. In Rhizopus delemar (strain RA 99-880 / ATCC MYA-4621 / FGSC 9543 / NRRL 43880) (Mucormycosis agent), this protein is Peptidyl-prolyl cis-trans isomerase cyp5 (cyp5).